Reading from the N-terminus, the 316-residue chain is Transcription initiation factor IIB (316 aa).

A TFIIB-type zinc finger spans residues 11–42; that stretch reads PRVTCPNHPDAILVEDYRAGDMICPECGLVVG. Residues Cys15, His18, Cys34, and Cys37 each coordinate Zn(2+). Phosphoserine occurs at positions 70, 76, and 92. Repeat copies occupy residues 124 to 200 and 218 to 294. Lys152, Arg154, Lys189, and Lys196 together coordinate DNA. The tract at residues 189–193 is core promoter DNA-binding; the sequence is KEIGR. Residue Lys238 is modified to N6-acetyllysine; by autocatalysis. A necessary for TATA box-bound complex TBP formation region spans residues 244–316; it reads LVPGRSPISV…DTPVDKLPQL (73 aa). Arg248 contributes to the DNA binding site. The core promoter DNA-binding stretch occupies residues 249-252; sequence SPIS. DNA is bound by residues Lys272, Ala281, Thr284, Arg286, and Arg290. Positions 283–286 are core promoter DNA-binding; sequence VTIR.

This sequence belongs to the TFIIB family. Found in a ternary complex with TATA box-bound TBP. Part of a TFIID-containing RNA polymerase II pre-initiation complex (PIC) that is composed of TBP and at least GTF2A1, GTF2A2, GTF2E1, GTF2E2, GTF2F1, GTF2H2, GTF2H3, GTF2H4, GTF2H5, GTF2B, TCEA1, ERCC2, ERCC3, TAF1, TAF2, TAF3, TAF4, TAF5, TAF6, TAF7, TAF8, TAF9, TAF10, TAF11, TAF12 and TAF13. Associates with TFIID-TFIIA (DA complex) to form TFIID-TFIIA-TFIIB (DAB complex), which is then recognized by RNA polymerase II (Pol II). Found in a RNA polymerase II initiation complex. Interacts (via C-terminus) with TBP; this interaction with TATA box-bound TBP guides Pol II into the PIC. Interacts (via N-terminus) with Pol II. Interacts (via C-terminus) with SSU72; this interaction is inhibited by SYMPK. Interacts with NR2F1; this interaction is direct. Interacts with PGR. Interacts with ESR1. Interacts with GTF2F1 (via C-terminus and preferentially via acetylated form); this interaction prevents binding of GTF2B to GTF2F2. Interacts with GTF2F2 (via N-terminus); this interaction is inhibited in presence of GTF2F1. Interacts with the transcription elongation factor TCEA2. Interacts with HSF1 (via transactivation domain). Interacts with GPBP1. Acetylated. Autoacetylated; autoacetylation at Lys-238 stimulates transcription activation.

It localises to the nucleus. It is found in the chromosome. The catalysed reaction is L-lysyl-[protein] + acetyl-CoA = N(6)-acetyl-L-lysyl-[protein] + CoA + H(+). General transcription factor that plays a role in transcription initiation by RNA polymerase II (Pol II). Involved in the pre-initiation complex (PIC) formation and Pol II recruitment at promoter DNA. Together with the TATA box-bound TBP forms the core initiation complex and provides a bridge between TBP and the Pol II-TFIIF complex. Released from the PIC early following the onset of transcription during the initiation and elongation transition and reassociates with TBP during the next transcription cycle. Associates with chromatin to core promoter-specific regions. Binds to two distinct DNA core promoter consensus sequence elements in a TBP-independent manner; these IIB-recognition elements (BREs) are localized immediately upstream (BREu), 5'-[GC][GC][GA]CGCC-3', and downstream (BREd), 5'-[GA]T[TGA][TG][GT][TG][TG]-3', of the TATA box element. Modulates transcription start site selection. Also exhibits autoacetyltransferase activity that contributes to the activated transcription. In Pongo abelii (Sumatran orangutan), this protein is Transcription initiation factor IIB.